The chain runs to 279 residues: Protease HtpX homolog (279 aa).

2 helical membrane passes run 4–24 (IFLF…VLAV) and 34–54 (GSLL…SLLM). Zn(2+) is bound at residue H140. Residue E141 is part of the active site. Residue H144 participates in Zn(2+) binding. 2 helical membrane-spanning segments follow: residues 155-175 (LIQG…ANLI) and 189-209 (FLVS…IVMW). Residue E215 participates in Zn(2+) binding.

It belongs to the peptidase M48B family. Zn(2+) is required as a cofactor.

Its subcellular location is the cell inner membrane. The sequence is that of Protease HtpX homolog from Neisseria meningitidis serogroup B (strain ATCC BAA-335 / MC58).